The following is a 388-amino-acid chain: Succinate--CoA ligase [ADP-forming] subunit beta (388 aa).

One can recognise an ATP-grasp domain in the interval 9–244 (KGVLSSFGVT…PDEYAAEELE (236 aa)). ATP contacts are provided by residues Lys46, 53–55 (GRG), Glu99, Val102, and Glu107. Positions 199 and 213 each coordinate Mg(2+). Substrate-binding positions include Asn264 and 320 to 322 (GIM).

Belongs to the succinate/malate CoA ligase beta subunit family. Heterotetramer of two alpha and two beta subunits. It depends on Mg(2+) as a cofactor.

It carries out the reaction succinate + ATP + CoA = succinyl-CoA + ADP + phosphate. The enzyme catalyses GTP + succinate + CoA = succinyl-CoA + GDP + phosphate. It participates in carbohydrate metabolism; tricarboxylic acid cycle; succinate from succinyl-CoA (ligase route): step 1/1. Its function is as follows. Succinyl-CoA synthetase functions in the citric acid cycle (TCA), coupling the hydrolysis of succinyl-CoA to the synthesis of either ATP or GTP and thus represents the only step of substrate-level phosphorylation in the TCA. The beta subunit provides nucleotide specificity of the enzyme and binds the substrate succinate, while the binding sites for coenzyme A and phosphate are found in the alpha subunit. In Anaplasma marginale (strain St. Maries), this protein is Succinate--CoA ligase [ADP-forming] subunit beta.